Here is a 121-residue protein sequence, read N- to C-terminus: Putative iron-sulfur cluster insertion protein ErpA 1 (121 aa).

The iron-sulfur cluster site is built by Cys49, Cys113, and Cys115.

The protein belongs to the HesB/IscA family. In terms of assembly, homodimer. Requires iron-sulfur cluster as cofactor.

Its function is as follows. Required for insertion of 4Fe-4S clusters. In Polaromonas naphthalenivorans (strain CJ2), this protein is Putative iron-sulfur cluster insertion protein ErpA 1.